The primary structure comprises 739 residues: Phosphoribosylformylglycinamidine synthase subunit PurL (739 aa).

The active site involves H54. Residues Y57 and K96 each coordinate ATP. E98 provides a ligand contact to Mg(2+). Residues 99–102 (SHNH) and R121 contribute to the substrate site. H100 functions as the Proton acceptor in the catalytic mechanism. D122 is a binding site for Mg(2+). Q245 lines the substrate pocket. Mg(2+) is bound at residue D273. Position 317 to 319 (317 to 319 (ESQ)) interacts with substrate. D500 and G537 together coordinate ATP. N538 serves as a coordination point for Mg(2+). S540 contributes to the substrate binding site.

The protein belongs to the FGAMS family. Monomer. Part of the FGAM synthase complex composed of 1 PurL, 1 PurQ and 2 PurS subunits.

It localises to the cytoplasm. The enzyme catalyses N(2)-formyl-N(1)-(5-phospho-beta-D-ribosyl)glycinamide + L-glutamine + ATP + H2O = 2-formamido-N(1)-(5-O-phospho-beta-D-ribosyl)acetamidine + L-glutamate + ADP + phosphate + H(+). The protein operates within purine metabolism; IMP biosynthesis via de novo pathway; 5-amino-1-(5-phospho-D-ribosyl)imidazole from N(2)-formyl-N(1)-(5-phospho-D-ribosyl)glycinamide: step 1/2. In terms of biological role, part of the phosphoribosylformylglycinamidine synthase complex involved in the purines biosynthetic pathway. Catalyzes the ATP-dependent conversion of formylglycinamide ribonucleotide (FGAR) and glutamine to yield formylglycinamidine ribonucleotide (FGAM) and glutamate. The FGAM synthase complex is composed of three subunits. PurQ produces an ammonia molecule by converting glutamine to glutamate. PurL transfers the ammonia molecule to FGAR to form FGAM in an ATP-dependent manner. PurS interacts with PurQ and PurL and is thought to assist in the transfer of the ammonia molecule from PurQ to PurL. The sequence is that of Phosphoribosylformylglycinamidine synthase subunit PurL from Bacillus cereus (strain Q1).